A 73-amino-acid chain; its full sequence is U3-agatoxin-Ao1j (73 aa).

Positions methionine 1–alanine 20 are cleaved as a signal peptide. Residues isoleucine 21–arginine 34 constitute a propeptide that is removed on maturation. 4 disulfide bridges follow: cysteine 36-cysteine 52, cysteine 43-cysteine 57, cysteine 51-cysteine 67, and cysteine 59-cysteine 65. Serine 71 is subject to Serine amide.

The protein belongs to the neurotoxin 07 (Beta/delta-agtx) family. 03 (aga-4) subfamily. Aga sub-subfamily. As to expression, expressed by the venom gland.

Its subcellular location is the secreted. Its function is as follows. Insecticidal neurotoxin that induces an irreversible spastic paralysis when injected into insects. Modifies presynaptic voltage-gated sodium channels (Nav), causing them to open at the normal resting potential of the nerve. This leads to spontaneous release of neurotransmitter and repetitive action potentials in motor neurons. The chain is U3-agatoxin-Ao1j from Agelena orientalis (Funnel-web spider).